Consider the following 180-residue polypeptide: Ribulose bisphosphate carboxylase small subunit, chloroplastic 2 (180 aa).

The N-terminal 56 residues, methionine 1–serine 56, are a transit peptide targeting the chloroplast.

Belongs to the RuBisCO small chain family. As to quaternary structure, heterohexadecamer of 8 large and 8 small subunits. (Microbial infection) Binds to tobamovirus movement protein; this interaction seems required for viral systemic movement.

It is found in the plastid. It localises to the chloroplast. The protein localises to the cell junction. Its subcellular location is the plasmodesma. RuBisCO catalyzes two reactions: the carboxylation of D-ribulose 1,5-bisphosphate, the primary event in carbon dioxide fixation, as well as the oxidative fragmentation of the pentose substrate. Both reactions occur simultaneously and in competition at the same active site. Although the small subunit is not catalytic it is essential for maximal activity. Involved in antiviral defenses. The chain is Ribulose bisphosphate carboxylase small subunit, chloroplastic 2 from Solanum lycopersicum (Tomato).